Reading from the N-terminus, the 295-residue chain is Ribosomal RNA small subunit methyltransferase A (295 aa).

Positions 40, 42, 67, 88, 118, and 135 each coordinate S-adenosyl-L-methionine.

The protein belongs to the class I-like SAM-binding methyltransferase superfamily. rRNA adenine N(6)-methyltransferase family. RsmA subfamily.

It localises to the cytoplasm. The enzyme catalyses adenosine(1518)/adenosine(1519) in 16S rRNA + 4 S-adenosyl-L-methionine = N(6)-dimethyladenosine(1518)/N(6)-dimethyladenosine(1519) in 16S rRNA + 4 S-adenosyl-L-homocysteine + 4 H(+). Functionally, specifically dimethylates two adjacent adenosines (A1518 and A1519) in the loop of a conserved hairpin near the 3'-end of 16S rRNA in the 30S particle. May play a critical role in biogenesis of 30S subunits. In Arthrobacter sp. (strain FB24), this protein is Ribosomal RNA small subunit methyltransferase A.